The following is a 302-amino-acid chain: Protein transport protein SEC13 homolog B (302 aa).

6 WD repeats span residues 9–48, 54–95, 101–142, 148–201, 208–251, and 257–296; these read GHEDIVHDVQMDYYGKRIATASSDCTIKITGVSNNGGSQQ, GHRG…QWTQ, DHKS…GWDT, AHPV…WKMD, KHTD…EQWE, and DFMTPVWRVSWSLTGNLLAVSDGNNNVTVWKEAVDGEWEQ.

The protein belongs to the WD repeat SEC13 family. In terms of assembly, part of the nuclear pore complex (NPC). The NPC has an eight-fold symmetrical structure comprising a central transport channel and two rings, the cytoplasmic and nuclear rings, to which eight filaments are attached. The cytoplasmic filaments have loose ends, while the nuclear filaments are joined in a distal ring, forming a nuclear basket. NPCs are highly dynamic in configuration and composition, and can be devided in 3 subcomplexes, the NUP62 subcomplex, the NUP107-160 subcomplex and the NUP93 subcomplex, containing approximately 30 different nucleoporin proteins. Interacts with MAG5, SEC31A and SEC31B.

It localises to the golgi apparatus. The protein resides in the endoplasmic reticulum. Its subcellular location is the nucleus envelope. It is found in the nucleus. The protein localises to the nuclear pore complex. In terms of biological role, required for protein transport from the endoplasmic reticulum to the Golgi apparatus. The chain is Protein transport protein SEC13 homolog B from Arabidopsis thaliana (Mouse-ear cress).